Consider the following 378-residue polypeptide: Quinolinate synthase (378 aa).

Residues H59 and S80 each coordinate iminosuccinate. Position 125 (C125) interacts with [4Fe-4S] cluster. Residues 151–153 and S168 contribute to the iminosuccinate site; that span reads YAN. C212 is a [4Fe-4S] cluster binding site. Iminosuccinate contacts are provided by residues 238–240 and T255; that span reads HPE. Residue C309 coordinates [4Fe-4S] cluster.

The protein belongs to the quinolinate synthase family. Type 1 subfamily. The cofactor is [4Fe-4S] cluster.

The protein localises to the cytoplasm. The enzyme catalyses iminosuccinate + dihydroxyacetone phosphate = quinolinate + phosphate + 2 H2O + H(+). Its pathway is cofactor biosynthesis; NAD(+) biosynthesis; quinolinate from iminoaspartate: step 1/1. In terms of biological role, catalyzes the condensation of iminoaspartate with dihydroxyacetone phosphate to form quinolinate. This Burkholderia mallei (strain NCTC 10247) protein is Quinolinate synthase.